A 351-amino-acid chain; its full sequence is Phosphoribosylformylglycinamidine cyclo-ligase (351 aa).

Belongs to the AIR synthase family.

Its subcellular location is the cytoplasm. It catalyses the reaction 2-formamido-N(1)-(5-O-phospho-beta-D-ribosyl)acetamidine + ATP = 5-amino-1-(5-phospho-beta-D-ribosyl)imidazole + ADP + phosphate + H(+). It participates in purine metabolism; IMP biosynthesis via de novo pathway; 5-amino-1-(5-phospho-D-ribosyl)imidazole from N(2)-formyl-N(1)-(5-phospho-D-ribosyl)glycinamide: step 2/2. This is Phosphoribosylformylglycinamidine cyclo-ligase from Burkholderia pseudomallei (strain 668).